Reading from the N-terminus, the 360-residue chain is MIIWLSNFLEQYFPFFRLFEYLSFRAILSIITALTISLWMGPKLIAWLQNLQIGQVVRDDGPESHFSKRGTPTMGGIMILTAISVTVFLWADLTNPYVWAVMFVLLGYGAVGFVDDYRKVVRKNTDGLIARWKYFWQSSIALVVAFALYAYGKDTAATQLVVPFFKEVMPQLGLAYILLTYFVIVGTSNAVNLTDGLDGLAIMPTVFVAAGFAFIAWATGNVQFANYLHIPHIPLASELVVVCAAIVGAGFGFLWFNTYPAQVFMGDVGSLALGGALGTIAVLVRQEFLLVIMGGVFVVETLSVILQVGSYKLRGQRIFRMAPIHHHYELKGWPEPRVIVRFWIISMLLVLIALATLKVR.

The next 10 membrane-spanning stretches (helical) occupy residues 27–47 (ILSI…LIAW), 73–93 (TMGG…WADL), 94–114 (TNPY…VGFV), 132–152 (WKYF…YAYG), 168–188 (VMPQ…VGTS), 199–219 (GLAI…AWAT), 236–256 (ASEL…FLWF), 263–283 (VFMG…IAVL), 288–308 (FLLV…ILQV), and 338–358 (VIVR…ATLK).

The protein belongs to the glycosyltransferase 4 family. MraY subfamily. Mg(2+) is required as a cofactor.

Its subcellular location is the cell inner membrane. It catalyses the reaction UDP-N-acetyl-alpha-D-muramoyl-L-alanyl-gamma-D-glutamyl-meso-2,6-diaminopimeloyl-D-alanyl-D-alanine + di-trans,octa-cis-undecaprenyl phosphate = di-trans,octa-cis-undecaprenyl diphospho-N-acetyl-alpha-D-muramoyl-L-alanyl-D-glutamyl-meso-2,6-diaminopimeloyl-D-alanyl-D-alanine + UMP. It participates in cell wall biogenesis; peptidoglycan biosynthesis. Catalyzes the initial step of the lipid cycle reactions in the biosynthesis of the cell wall peptidoglycan: transfers peptidoglycan precursor phospho-MurNAc-pentapeptide from UDP-MurNAc-pentapeptide onto the lipid carrier undecaprenyl phosphate, yielding undecaprenyl-pyrophosphoryl-MurNAc-pentapeptide, known as lipid I. The sequence is that of Phospho-N-acetylmuramoyl-pentapeptide-transferase from Aliivibrio fischeri (strain MJ11) (Vibrio fischeri).